The primary structure comprises 432 residues: uncharacterized protein (432 aa).

SIS domains lie at 105–244 (WLTE…DLVS) and 277–422 (CDKK…VDLP).

This is an uncharacterized protein from Saccharomyces cerevisiae (strain ATCC 204508 / S288c) (Baker's yeast).